The following is an 86-amino-acid chain: Anti-adapter protein IraP (86 aa).

Residues 1 to 36 adopt a coiled-coil conformation; that stretch reads MKNLIAELLFKLAQKEEESKELCAQVEALEIIVTAM.

The protein belongs to the IraP family. Interacts with RssB.

The protein resides in the cytoplasm. Inhibits RpoS proteolysis by regulating RssB activity, thereby increasing the stability of the sigma stress factor RpoS especially during phosphate starvation, but also in stationary phase and during nitrogen starvation. Its effect on RpoS stability is due to its interaction with RssB, which probably blocks the interaction of RssB with RpoS, and the consequent delivery of the RssB-RpoS complex to the ClpXP protein degradation pathway. The chain is Anti-adapter protein IraP from Shigella flexneri serotype 5b (strain 8401).